Consider the following 319-residue polypeptide: ATP-dependent 6-phosphofructokinase (319 aa).

Gly11 is a binding site for ATP. ADP is bound at residue 21–25 (RAVVR). ATP is bound by residues 72–73 (RC) and 102–105 (GDGS). Asp103 provides a ligand contact to Mg(2+). 125-127 (TID) lines the substrate pocket. Catalysis depends on Asp127, which acts as the Proton acceptor. An ADP-binding site is contributed by Arg154. Residues Arg162 and 169 to 171 (MGR) contribute to the substrate site. Residues 185-187 (GAE), Arg211, and 213-215 (KRH) contribute to the ADP site. Substrate contacts are provided by residues Glu222, Arg243, and 249 to 252 (HVQR).

It belongs to the phosphofructokinase type A (PFKA) family. ATP-dependent PFK group I subfamily. Prokaryotic clade 'B1' sub-subfamily. In terms of assembly, homotetramer. It depends on Mg(2+) as a cofactor.

It localises to the cytoplasm. It carries out the reaction beta-D-fructose 6-phosphate + ATP = beta-D-fructose 1,6-bisphosphate + ADP + H(+). It participates in carbohydrate degradation; glycolysis; D-glyceraldehyde 3-phosphate and glycerone phosphate from D-glucose: step 3/4. With respect to regulation, allosterically activated by ADP and other diphosphonucleosides, and allosterically inhibited by phosphoenolpyruvate. Catalyzes the phosphorylation of D-fructose 6-phosphate to fructose 1,6-bisphosphate by ATP, the first committing step of glycolysis. In Clostridioides difficile (strain 630) (Peptoclostridium difficile), this protein is ATP-dependent 6-phosphofructokinase.